We begin with the raw amino-acid sequence, 315 residues long: Homoserine kinase (315 aa).

An ATP-binding site is contributed by 97 to 107 (PPARGLGSSAT).

Belongs to the GHMP kinase family. Homoserine kinase subfamily.

Its subcellular location is the cytoplasm. It carries out the reaction L-homoserine + ATP = O-phospho-L-homoserine + ADP + H(+). It participates in amino-acid biosynthesis; L-threonine biosynthesis; L-threonine from L-aspartate: step 4/5. Functionally, catalyzes the ATP-dependent phosphorylation of L-homoserine to L-homoserine phosphate. The sequence is that of Homoserine kinase from Prochlorococcus marinus (strain MIT 9301).